Reading from the N-terminus, the 166-residue chain is Phospholipase A2 inhibitor clone 10 (166 aa).

An N-terminal signal peptide occupies residues 1 to 19; the sequence is MRLILLSSLLLLGIFLANG. The 116-residue stretch at 46-161 folds into the C-type lectin domain; that stretch reads LKYSFLTVHR…CDDNLLVVCE (116 aa). Cystine bridges form between cysteine 83–cysteine 160 and cysteine 138–cysteine 152. Asparagine 122 is a glycosylation site (N-linked (GlcNAc...) asparagine).

Belongs to the alpha-type phospholipase A2 inhibitor family. As to quaternary structure, homotrimer; non-covalently linked. Expressed by the liver.

Its subcellular location is the secreted. This phospholipase A2 inhibitor binds directly phospholipase A2 in the presence or absence of calcium. This chain is Phospholipase A2 inhibitor clone 10, found in Bothrops moojeni (Lance-headed viper).